The chain runs to 221 residues: Small ribosomal subunit protein uS3 (221 aa).

Residues 39 to 107 (LRKFLKDKLK…EVFLSIQEVR (69 aa)) enclose the KH type-2 domain.

Belongs to the universal ribosomal protein uS3 family. Part of the 30S ribosomal subunit. Forms a tight complex with proteins S10 and S14.

In terms of biological role, binds the lower part of the 30S subunit head. Binds mRNA in the 70S ribosome, positioning it for translation. In Bdellovibrio bacteriovorus (strain ATCC 15356 / DSM 50701 / NCIMB 9529 / HD100), this protein is Small ribosomal subunit protein uS3.